The primary structure comprises 269 residues: Tryptophan synthase alpha chain (269 aa).

Catalysis depends on proton acceptor residues Glu49 and Asp60.

This sequence belongs to the TrpA family. As to quaternary structure, tetramer of two alpha and two beta chains.

The enzyme catalyses (1S,2R)-1-C-(indol-3-yl)glycerol 3-phosphate + L-serine = D-glyceraldehyde 3-phosphate + L-tryptophan + H2O. It participates in amino-acid biosynthesis; L-tryptophan biosynthesis; L-tryptophan from chorismate: step 5/5. Its function is as follows. The alpha subunit is responsible for the aldol cleavage of indoleglycerol phosphate to indole and glyceraldehyde 3-phosphate. This Actinobacillus pleuropneumoniae serotype 7 (strain AP76) protein is Tryptophan synthase alpha chain.